The primary structure comprises 156 residues: Small ribosomal subunit protein uS7c (156 aa).

This sequence belongs to the universal ribosomal protein uS7 family. In terms of assembly, part of the 30S ribosomal subunit.

Its subcellular location is the plastid. It is found in the chloroplast. One of the primary rRNA binding proteins, it binds directly to 16S rRNA where it nucleates assembly of the head domain of the 30S subunit. In Euglena gracilis, this protein is Small ribosomal subunit protein uS7c (rps7).